The sequence spans 172 residues: MERAAKKEAVEALNEVFKTTGVAVVAHYSGLTVAQMQKLRMQMKQAGASVKVSKNRLAKIALEGTDVVAIGSLLKGPTVIATSNDPVAAPKVAVEFAKTNESFVILGGSMGKTVLNVDSVKALASLPSLDELRGKLVGLLVAPATKIAQLSTAPAAKLARVVQAYASKSEAA.

It belongs to the universal ribosomal protein uL10 family. As to quaternary structure, part of the ribosomal stalk of the 50S ribosomal subunit. The N-terminus interacts with L11 and the large rRNA to form the base of the stalk. The C-terminus forms an elongated spine to which L12 dimers bind in a sequential fashion forming a multimeric L10(L12)X complex.

Forms part of the ribosomal stalk, playing a central role in the interaction of the ribosome with GTP-bound translation factors. In Nitrobacter hamburgensis (strain DSM 10229 / NCIMB 13809 / X14), this protein is Large ribosomal subunit protein uL10.